The following is a 43-amino-acid chain: Myotoxin-2 (43 aa).

3 cysteine pairs are disulfide-bonded: Cys-4–Cys-36, Cys-11–Cys-30, and Cys-18–Cys-37.

This sequence belongs to the crotamine-myotoxin family. In terms of assembly, monomer. In terms of tissue distribution, expressed by the venom gland.

It localises to the secreted. In terms of biological role, cationic peptide that possesses multiple functions. It acts as a cell-penetrating peptide (CPP), and as a potent voltage-gated potassium channel (Kv) inhibitor. It exhibits antimicrobial activities, hind limb paralysis, and severe muscle necrosis by a non-enzymatic mechanism. This chain is Myotoxin-2, found in Crotalus concolor (Midget faded rattlesnake).